Reading from the N-terminus, the 183-residue chain is Shikimate kinase (183 aa).

ATP is bound at residue 19–24 (GAGKTT). A Mg(2+)-binding site is contributed by Thr-23. Positions 41, 65, and 87 each coordinate substrate. Arg-124 contributes to the ATP binding site. Substrate is bound at residue Arg-143.

Belongs to the shikimate kinase family. Monomer. The cofactor is Mg(2+).

The protein resides in the cytoplasm. It carries out the reaction shikimate + ATP = 3-phosphoshikimate + ADP + H(+). It functions in the pathway metabolic intermediate biosynthesis; chorismate biosynthesis; chorismate from D-erythrose 4-phosphate and phosphoenolpyruvate: step 5/7. In terms of biological role, catalyzes the specific phosphorylation of the 3-hydroxyl group of shikimic acid using ATP as a cosubstrate. The protein is Shikimate kinase of Thermosynechococcus vestitus (strain NIES-2133 / IAM M-273 / BP-1).